Here is a 431-residue protein sequence, read N- to C-terminus: MSTIIDVYAREVLDSRGNPTVEVEVYTESGAFGRAIVPSGASTGEHEAVELRDGDKSRYLGKGVLNAVNNVNEAIAPEIVGFDVTDQAGIDRAMIELDGTPNKGKLGANAILGVSMAVAHAAADFVGLPLYRYLGGFNAKQLPTPMMNIINGGSHADNNVDFQEFMILPVGAPTFKESIRMGAEVFHALKAVLHDKGLNTAVGDEGGFAPNLGSNREALEVIIEAIEKAGYKAGENVFLGMDVASSEFYNKETGKYDLAGEGRTGLTSAEMVDFYEELCKDFPIISIEDGLDENDWDGHKLLTERIGDKVQLVGDDLFVTNTQKLAEGIEKGISNSILIKVNQIGTLTETFEAIEMAKRAGYTAVVSHRSGETEDATIADIAVATNAGQIKTGSMSRTDRIAKYNQLLRIEDELGEIAVYDGIKSFYNIKR.

(2R)-2-phosphoglycerate is bound at residue Q163. Residue E205 is the Proton donor of the active site. 3 residues coordinate Mg(2+): D242, E288, and D315. 4 residues coordinate (2R)-2-phosphoglycerate: K340, R369, S370, and K391. K340 (proton acceptor) is an active-site residue.

The protein belongs to the enolase family. Mg(2+) serves as cofactor.

The protein localises to the cytoplasm. Its subcellular location is the secreted. It localises to the cell surface. It catalyses the reaction (2R)-2-phosphoglycerate = phosphoenolpyruvate + H2O. Its pathway is carbohydrate degradation; glycolysis; pyruvate from D-glyceraldehyde 3-phosphate: step 4/5. In terms of biological role, catalyzes the reversible conversion of 2-phosphoglycerate (2-PG) into phosphoenolpyruvate (PEP). It is essential for the degradation of carbohydrates via glycolysis. The polypeptide is Enolase (Bacillus mycoides (strain KBAB4) (Bacillus weihenstephanensis)).